Consider the following 446-residue polypeptide: Chromosomal replication initiator protein DnaA (446 aa).

The tract at residues 1 to 73 (MAAQLNELWQ…INSMKIITTK (73 aa)) is domain I, interacts with DnaA modulators. The domain II stretch occupies residues 73 to 107 (KKYDIAFLISSEEALETDEDQETDTNNVNTDTSSS). The tract at residues 108-324 (MLNPKYKFDS…GALIRIVAFS (217 aa)) is domain III, AAA+ region. ATP contacts are provided by Gly152, Gly154, Lys155, and Thr156. Positions 325–446 (SLTNKEISVD…NEITKRFSPK (122 aa)) are domain IV, binds dsDNA.

It belongs to the DnaA family. Oligomerizes as a right-handed, spiral filament on DNA at oriC.

The protein resides in the cytoplasm. Functionally, plays an essential role in the initiation and regulation of chromosomal replication. ATP-DnaA binds to the origin of replication (oriC) to initiate formation of the DNA replication initiation complex once per cell cycle. Binds the DnaA box (a 9 base pair repeat at the origin) and separates the double-stranded (ds)DNA. Forms a right-handed helical filament on oriC DNA; dsDNA binds to the exterior of the filament while single-stranded (ss)DNA is stabiized in the filament's interior. The ATP-DnaA-oriC complex binds and stabilizes one strand of the AT-rich DNA unwinding element (DUE), permitting loading of DNA polymerase. After initiation quickly degrades to an ADP-DnaA complex that is not apt for DNA replication. Binds acidic phospholipids. The protein is Chromosomal replication initiator protein DnaA of Clostridium acetobutylicum (strain ATCC 824 / DSM 792 / JCM 1419 / IAM 19013 / LMG 5710 / NBRC 13948 / NRRL B-527 / VKM B-1787 / 2291 / W).